Reading from the N-terminus, the 503-residue chain is Maturase K (503 aa).

The protein belongs to the intron maturase 2 family. MatK subfamily.

The protein localises to the plastid. The protein resides in the chloroplast. Its function is as follows. Usually encoded in the trnK tRNA gene intron. Probably assists in splicing its own and other chloroplast group II introns. The polypeptide is Maturase K (Rosa gigantea (Giant tea rose)).